The chain runs to 1030 residues: Probable serine/threonine-protein kinase SIS8 (1030 aa).

Polar residues-rich tracts occupy residues 44-58 and 399-419; these read PNQS…STTK and YSAS…NGIE. Disordered regions lie at residues 44-84, 399-474, 555-625, and 689-736; these read PNQS…PEIK, YSAS…KAPF, TVES…ASST, and LGSN…SDCD. Composition is skewed to basic and acidic residues over residues 426–435, 458–471, and 560–580; these read TEFRTGEHRS, ISRE…KVEK, and NSTE…EGRH. Low complexity predominate over residues 613 to 625; sequence SQSDSSHSEASST. The 256-residue stretch at 748–1003 folds into the Protein kinase domain; that stretch reads ITVGERIGLG…AEIMASLKRL (256 aa). ATP-binding positions include 754 to 762 and Lys775; that span reads IGLGSYGEV. Residue Asp871 is the Proton acceptor of the active site. Over residues 1007 to 1023 the composition is skewed to polar residues; the sequence is VTGSNIPRPVPSSSSLP. The disordered stretch occupies residues 1007-1030; that stretch reads VTGSNIPRPVPSSSSLPTEHEQKD.

The protein belongs to the protein kinase superfamily. Ser/Thr protein kinase family. Interacts with UGT72E1. As to expression, expressed roots, rosette and cauline leaves, and at lower levels in flowers and siliques.

The protein resides in the nucleus. It carries out the reaction L-seryl-[protein] + ATP = O-phospho-L-seryl-[protein] + ADP + H(+). The enzyme catalyses L-threonyl-[protein] + ATP = O-phospho-L-threonyl-[protein] + ADP + H(+). In terms of biological role, acts as a negative regulator of salt tolerance. Mediates sugar response during early seedling development. The polypeptide is Probable serine/threonine-protein kinase SIS8 (Arabidopsis thaliana (Mouse-ear cress)).